A 336-amino-acid polypeptide reads, in one-letter code: Biotin synthase (336 aa).

In terms of domain architecture, Radical SAM core spans 54–281 (NAIQLSTLLS…KAMVRLSAGR (228 aa)). [4Fe-4S] cluster is bound by residues Cys69, Cys73, and Cys76. [2Fe-2S] cluster contacts are provided by Cys113, Cys144, Cys204, and Arg276.

This sequence belongs to the radical SAM superfamily. Biotin synthase family. As to quaternary structure, homodimer. [4Fe-4S] cluster serves as cofactor. [2Fe-2S] cluster is required as a cofactor.

The catalysed reaction is (4R,5S)-dethiobiotin + (sulfur carrier)-SH + 2 reduced [2Fe-2S]-[ferredoxin] + 2 S-adenosyl-L-methionine = (sulfur carrier)-H + biotin + 2 5'-deoxyadenosine + 2 L-methionine + 2 oxidized [2Fe-2S]-[ferredoxin]. The protein operates within cofactor biosynthesis; biotin biosynthesis; biotin from 7,8-diaminononanoate: step 2/2. Its function is as follows. Catalyzes the conversion of dethiobiotin (DTB) to biotin by the insertion of a sulfur atom into dethiobiotin via a radical-based mechanism. The protein is Biotin synthase of Burkholderia pseudomallei (strain 1106a).